Here is a 406-residue protein sequence, read N- to C-terminus: 1H-pyrrole-2-carbonyl-[peptidyl-carrier protein] brominase (406 aa).

Positions 17, 36, 42, 44, 45, 48, 101, 124, 291, and 304 each coordinate FAD.

This sequence belongs to the flavin-dependent halogenase family.

It carries out the reaction (1H-pyrrole-2-carbonyl)-[peptidyl-carrier protein] + 3 bromide + 3 FADH2 + 3 O2 = (3,4,5-tribromo-1H-pyrrole-2-carbonyl)-[peptidyl-carrier protein] + 3 FAD + 6 H2O. The catalysed reaction is (1H-pyrrole-2-carbonyl)-[peptidyl-carrier protein] + bromide + FADH2 + O2 = (5-bromo-1H-pyrrole-2-carbonyl)-[peptidyl-carrier protein] + FAD + 2 H2O. It catalyses the reaction (5-bromo-1H-pyrrole-2-carbonyl)-[peptidyl-carrier protein] + bromide + FADH2 + O2 = (4,5-dibromo-1H-pyrrole-2-carbonyl)-[peptidyl-carrier protein] + FAD + 2 H2O. The enzyme catalyses (4,5-dibromo-1H-pyrrole-2-carbonyl)-[peptidyl-carrier protein] + bromide + FADH2 + O2 = (3,4,5-tribromo-1H-pyrrole-2-carbonyl)-[peptidyl-carrier protein] + FAD + 2 H2O. Brominase involved in the biosynthesis of polybrominated aromatic organic compounds. Catalyzes three successive rounds of bromination of pyrrolyl-S-Bmp1 to produce mono-, di- and tribromopyrrolyl-S-Bmp1. This is 1H-pyrrole-2-carbonyl-[peptidyl-carrier protein] brominase from Pseudoalteromonas luteoviolacea (strain 2ta16).